Consider the following 460-residue polypeptide: MPSVGVKLYSVFFKFLLKHRLQNRIQSSGDESSSDPFGVTTRPEESVAAPNPLFTDGVATKDIHIDPLTSLSVRIFLPESALTPLEPSTSACVYSGKARTLNNIAGSDLLSRRNSLGSSNSLLSHKVESRRNSYGYTTGSSSPEAGSSDVYRGYAPSSSGGNSRKLPVMLQFHGGGWVSGSNDSVANDFFCRRMAKHCDIIVLAVGYRLAPENRYPAACEDGFKVLKWLGKQANLAECNKSMGNSRRPGGEVKKSEVNKHIVDAFGASLVEPWLANHADPSRCVLLGVSCGANIADYVARKAIEVGQNLDPVKVVAQVLMYPFFIGSVPTQSEIKQANSYFYDKPMCILAWKLFLPEEEFSLDHQAANPLVPGRSPPLKFMPPTLTIVAEHDWMRDRAIAYSEELRKVNVDAPVLEYKDAVHEFATLDMLLRTPQAQACAEDIAIWAKKYISLRGHEFSY.

Polar residues-rich tracts occupy residues 26 to 35 and 132 to 145; these read QSSGDESSSD and NSYGYTTGSSSPEA. 2 disordered regions span residues 26–52 and 132–161; these read QSSGDESSSDPFGVTTRPEESVAAPNP and NSYGYTTGSSSPEAGSSDVYRGYAPSSSGG. Positions 173–175 match the Involved in the stabilization of the negatively charged intermediate by the formation of the oxyanion hole motif; the sequence is HGG. Active-site residues include S289, D392, and H422.

The protein belongs to the 'GDXG' lipolytic enzyme family. As to expression, expressed in roots, leaves, stems, flowers and siliques.

The enzyme catalyses a carboxylic ester + H2O = an alcohol + a carboxylate + H(+). Carboxylesterase acting on esters with varying acyl chain length. In Arabidopsis thaliana (Mouse-ear cress), this protein is Probable carboxylesterase 11 (CXE11).